The primary structure comprises 360 residues: Protein phosphatase methylesterase 1 (360 aa).

Positions 26–50 (DEDDIPEPAVMPPTGNSSSTANTED) are disordered. Active-site residues include S167, D192, and H316.

The protein belongs to the AB hydrolase superfamily.

It carries out the reaction [phosphatase 2A protein]-C-terminal L-leucine methyl ester + H2O = [phosphatase 2A protein]-C-terminal L-leucine + methanol + H(+). Demethylates proteins that have been reversibly carboxymethylated. Demethylates the phosphatase PP2A catalytic subunit. Involved in the regulation of filamentous growth. The polypeptide is Protein phosphatase methylesterase 1 (PPE1) (Candida albicans (strain SC5314 / ATCC MYA-2876) (Yeast)).